We begin with the raw amino-acid sequence, 1357 residues long: DNA-directed RNA polymerase subunit beta (1357 aa).

This sequence belongs to the RNA polymerase beta chain family. In terms of assembly, the RNAP catalytic core consists of 2 alpha, 1 beta, 1 beta' and 1 omega subunit. When a sigma factor is associated with the core the holoenzyme is formed, which can initiate transcription.

The enzyme catalyses RNA(n) + a ribonucleoside 5'-triphosphate = RNA(n+1) + diphosphate. Functionally, DNA-dependent RNA polymerase catalyzes the transcription of DNA into RNA using the four ribonucleoside triphosphates as substrates. The sequence is that of DNA-directed RNA polymerase subunit beta from Nitrosomonas europaea (strain ATCC 19718 / CIP 103999 / KCTC 2705 / NBRC 14298).